The sequence spans 340 residues: Sesquiterpene synthase 6 (340 aa).

4 residues coordinate Mg(2+): Asp90, Asn229, Ser233, and Glu237. The short motif at 90 to 94 is the DDXXD motif element; the sequence is DDITD. The NSE/DTE motif signature appears at 229-237; it reads NDIYSFNNE. Residues Arg316 and Tyr317 each contribute to the (2E,6E)-farnesyl diphosphate site.

This sequence belongs to the terpene synthase family. Mg(2+) is required as a cofactor.

The catalysed reaction is (2E,6E)-farnesyl diphosphate = delta-cadinene + diphosphate. It catalyses the reaction (2E,6E)-farnesyl diphosphate = bicyclogermacrene + diphosphate. In terms of biological role, terpene cyclase that catalyzes the cyclization of farnesyl diphosphate (FPP) to various sesquiterpenes, including bicycloelemene, alpha-gurjunene, 9-epi-caryophylene, bicyclosesquiphellandrene, bicyclogermacrene and delta-cadinene. This Postia placenta (strain ATCC 44394 / Madison 698-R) (Brown rot fungus) protein is Sesquiterpene synthase 6.